The chain runs to 405 residues: Splicing factor 45 (405 aa).

Ser-2 bears the N-acetylserine mark. Ser-2 carries the phosphoserine modification. Residue Lys-15 forms a Glycyl lysine isopeptide (Lys-Gly) (interchain with G-Cter in SUMO2) linkage. Lys-21 is subject to N6-acetyllysine. Glycyl lysine isopeptide (Lys-Gly) (interchain with G-Cter in SUMO2) cross-links involve residues Lys-24 and Lys-33. Residue Lys-41 is modified to N6-acetyllysine; alternate. Lys-41 participates in a covalent cross-link: Glycyl lysine isopeptide (Lys-Gly) (interchain with G-Cter in SUMO2); alternate. A compositionally biased stretch (basic and acidic residues) spans 57 to 68 (LKRGGSSDDRQI). 2 disordered regions span residues 57 to 88 (LKRGGSSDDRQIADTPPHVAAGLKDPVPSGFS) and 114 to 233 (RQRE…FLAN). Lys-58 participates in a covalent cross-link: Glycyl lysine isopeptide (Lys-Gly) (interchain with G-Cter in SUMO2). Thr-71 is modified (phosphothreonine). Basic and acidic residues predominate over residues 114–153 (RQREERQRQRELERQKEIEEREKRRKDRHEASGFSRRPDP). 2 positions are modified to phosphoserine: Ser-155 and Ser-169. A compositionally biased stretch (basic and acidic residues) spans 182–200 (VEKDKELPRDFPYEEDSRP). Residue Ser-222 is modified to Phosphoserine. Residues 235–283 (GGTVAHKIMQKYGFREGQGLGKHEQGLSTALSVEKTSKRGGKIIVGDAT) enclose the G-patch domain. Residue Thr-237 is modified to Phosphothreonine. Residue Lys-256 forms a Glycyl lysine isopeptide (Lys-Gly) (interchain with G-Cter in SUMO2) linkage. At Ser-266 the chain carries Phosphoserine. Residue Lys-276 forms a Glycyl lysine isopeptide (Lys-Gly) (interchain with G-Cter in SUMO2) linkage. Phosphoserine occurs at positions 295 and 297. Residues 310-389 (VVLLRNMVGA…YFGGRVVKAC (80 aa)) enclose the RRM domain.

As to quaternary structure, binds SXL. Associates with the spliceosome. Interacts with SF3B1, SF1 and U2AF2.

It is found in the nucleus. In terms of biological role, splice factor that binds to the single-stranded 3'AG at the exon/intron border and promotes its utilization in the second catalytic step. Involved in the regulation of alternative splicing and the utilization of cryptic splice sites. The polypeptide is Splicing factor 45 (Rbm17) (Mus musculus (Mouse)).